Consider the following 383-residue polypeptide: Delta(12)-fatty-acid desaturase (383 aa).

Residues Met1–Val24 form a disordered region. Positions Lys14–Val24 are enriched in basic and acidic residues. Residues Leu56–Leu76 form a helical membrane-spanning segment. The Histidine box-1 motif lies at His105–His109. The chain crosses the membrane as a helical span at residues Trp117–Trp137. A Histidine box-2 motif is present at residues His141–His145. The next 3 membrane-spanning stretches (helical) occupy residues Ile179–Ser199, Ile225–Ala245, and Ile252–Leu272. Residues His315–His319 carry the Histidine box-3 motif.

The protein belongs to the fatty acid desaturase type 1 family. As to quaternary structure, homo- and heterodimer. Interacts with FAD3 but not with FAD6. FAD2-FAD3 heterodimers can form a metabolic channel in which 18:1-PC is converted to 18:3-PC without releasing a free 18:2-PC intermediate. Expressed in shoots and roots. Expressed in leaves, stems, flowers and siliques.

It localises to the endoplasmic reticulum membrane. It is found in the microsome membrane. It catalyses the reaction (9Z)-octadecenoyl-CoA + 2 Fe(II)-[cytochrome b5] + O2 + 2 H(+) = (9Z,12Z)-octadecadienoyl-CoA + 2 Fe(III)-[cytochrome b5] + 2 H2O. It carries out the reaction (9Z)-hexadecenoyl-CoA + 2 Fe(II)-[cytochrome b5] + O2 + 2 H(+) = (9Z,12Z)-hexadecadienoyl-CoA + 2 Fe(III)-[cytochrome b5] + 2 H2O. The enzyme catalyses a (9Z)-octadecenoyl-containing glycerolipid + 2 Fe(II)-[cytochrome b5] + O2 + 2 H(+) = a (9Z,12Z)-octadecadienoyl-containing glycerolipid + 2 Fe(III)-[cytochrome b5] + 2 H2O. The catalysed reaction is (9Z)-octadecenoyl-CoA + AH2 + O2 = (9Z,12Z)-octadecadienoyl-CoA + A + 2 H2O. It catalyses the reaction (9Z)-hexadecenoyl-CoA + AH2 + O2 = (9Z,12Z)-hexadecadienoyl-CoA + A + 2 H2O. It carries out the reaction (9Z)-tetradecenoyl-CoA + 2 Fe(II)-[cytochrome b5] + O2 + 2 H(+) = (9Z,12Z)-tetradecadienoyl-CoA + 2 Fe(III)-[cytochrome b5] + 2 H2O. The enzyme catalyses (9Z)-pentadecenoyl-CoA + 2 Fe(II)-[cytochrome b5] + O2 + 2 H(+) = (9Z,12Z)-pentadecadienoyl-CoA + 2 Fe(III)-[cytochrome b5] + 2 H2O. The catalysed reaction is (9Z)-heptadecenoyl-CoA + 2 Fe(II)-[cytochrome b5] + O2 + 2 H(+) = (9Z,12Z)-heptadecadienoyl-CoA + 2 Fe(III)-[cytochrome b5] + 2 H2O. It participates in lipid metabolism; polyunsaturated fatty acid biosynthesis. Functionally, ER (microsomal) omega-6 fatty acid desaturase introduces the second double bond in the biosynthesis of 18:3 fatty acids, important constituents of plant membranes. Delta(12)-desaturase with regioselectivity determined by the double bond (delta(9) position) and carboxyl group of the substrate. Can use both 16:1 and 18:1 fatty acids as substrates. It is thought to use cytochrome b5 as an electron donor and to act on fatty acids esterified to phosphatidylcholine (PC) and, possibly, other phospholipids. Very low constitutive hydroxylation activity. Required for desaturation of fatty acids present in extraplastidial membranes, including mitochondria. Required for salt tolerance during seed germination and early seedling growth. This Arabidopsis thaliana (Mouse-ear cress) protein is Delta(12)-fatty-acid desaturase.